The chain runs to 34 residues: Non-cysteinic peptide Bs 10 (34 aa).

The tract at residues 1–34 is disordered; the sequence is VTMGYIKDGDGKKIAKKKNKNGRKHVEIDLNKVG. Residues 14–23 are compositionally biased toward basic residues; the sequence is IAKKKNKNGR. Over residues 24 to 34 the composition is skewed to basic and acidic residues; it reads KHVEIDLNKVG.

Expressed by the venom gland.

It localises to the secreted. This Hottentotta tamulus sindicus (Scorpion) protein is Non-cysteinic peptide Bs 10.